The chain runs to 95 residues: Putative regulatory protein Pmob_0099 (95 aa).

It belongs to the RemA family.

This Petrotoga mobilis (strain DSM 10674 / SJ95) protein is Putative regulatory protein Pmob_0099.